Consider the following 1663-residue polypeptide: TPR repeat-containing protein DDB_G0287407 (1663 aa).

Disordered regions lie at residues 84 to 109 (RKTQPTSSNGSTSTTTTTTTTTQKGQ) and 326 to 359 (SEYSSTNDDGENDQSDDDDDNEDDDDFVEKNSNQ). Residues 89-105 (TSSNGSTSTTTTTTTTT) show a composition bias toward low complexity. Residues 333 to 352 (DDGENDQSDDDDDNEDDDDF) show a composition bias toward acidic residues. 6 TPR repeats span residues 1110–1143 (SDVWFRVASFLEELSQFDGAEVLYNKCRELYINN), 1150–1183 (AKVDRAMGRMYLTMGQNDKSDSKFRLALSIYTKE), 1192–1225 (AITLNLLGTLATNRCKFDEAKQILNQAMNICESK), 1234–1269 (ADIAYSLGSVCFVEPNRKLEVAEAYFARSLELTESK), 1278–1311 (ARILTRLGSLNIEKDTYADAEAFFKAALKIYEAR), and 1320–1353 (SQILRHMISLYEVQENYKMAEQCCIRALAITKKI). Disordered stretches follow at residues 1500–1528 (VAQPTSFNSPVQPPSPRTQQAIQQGQQQR) and 1544–1571 (QKVSSLQQQPQQQQQQQPSQGYGNRQNT). Positions 1516-1547 (RTQQAIQQGQQQRQQVQQQQQQVQQQMSQKVS) form a coiled coil. Composition is skewed to low complexity over residues 1518–1528 (QQAIQQGQQQR) and 1544–1563 (QKVSSLQQQPQQQQQQQPSQ).

The polypeptide is TPR repeat-containing protein DDB_G0287407 (Dictyostelium discoideum (Social amoeba)).